The sequence spans 253 residues: Ribosomal RNA small subunit methyltransferase A (253 aa).

Positions 12, 14, 39, 60, 81, and 104 each coordinate S-adenosyl-L-methionine.

It belongs to the class I-like SAM-binding methyltransferase superfamily. rRNA adenine N(6)-methyltransferase family. RsmA subfamily.

Its subcellular location is the cytoplasm. The enzyme catalyses adenosine(1518)/adenosine(1519) in 16S rRNA + 4 S-adenosyl-L-methionine = N(6)-dimethyladenosine(1518)/N(6)-dimethyladenosine(1519) in 16S rRNA + 4 S-adenosyl-L-homocysteine + 4 H(+). Its function is as follows. Specifically dimethylates two adjacent adenosines (A1518 and A1519) in the loop of a conserved hairpin near the 3'-end of 16S rRNA in the 30S particle. May play a critical role in biogenesis of 30S subunits. In Paracidovorax citrulli (strain AAC00-1) (Acidovorax citrulli), this protein is Ribosomal RNA small subunit methyltransferase A.